We begin with the raw amino-acid sequence, 160 residues long: Transcription elongation factor GreA (160 aa).

The stretch at 11 to 38 (YDRLMKELERLKSERPAIIQAIKEAREE) forms a coiled coil.

This sequence belongs to the GreA/GreB family.

Necessary for efficient RNA polymerase transcription elongation past template-encoded arresting sites. The arresting sites in DNA have the property of trapping a certain fraction of elongating RNA polymerases that pass through, resulting in locked ternary complexes. Cleavage of the nascent transcript by cleavage factors such as GreA or GreB allows the resumption of elongation from the new 3'terminus. GreA releases sequences of 2 to 3 nucleotides. This Nitratidesulfovibrio vulgaris (strain DSM 19637 / Miyazaki F) (Desulfovibrio vulgaris) protein is Transcription elongation factor GreA.